A 230-amino-acid chain; its full sequence is Prolactin-3D1 (230 aa).

Positions 1–29 (MQLTLTLSRASGMQLFLLVSSLLLWEKVA) are cleaved as a signal peptide. 2 disulfide bridges follow: C81-C200 and C217-C225. N-linked (GlcNAc...) asparagine glycosylation is found at N109 and N158.

It belongs to the somatotropin/prolactin family.

It localises to the secreted. This chain is Prolactin-3D1 (Prl3d1), found in Rattus norvegicus (Rat).